A 264-amino-acid chain; its full sequence is Glutamate racemase (264 aa).

Substrate contacts are provided by residues 10–11 and 42–43; these read DS and YG. The Proton donor/acceptor role is filled by cysteine 73. 74–75 is a substrate binding site; the sequence is NT. Catalysis depends on cysteine 183, which acts as the Proton donor/acceptor. 184-185 is a substrate binding site; the sequence is TH.

It belongs to the aspartate/glutamate racemases family.

It carries out the reaction L-glutamate = D-glutamate. Its pathway is cell wall biogenesis; peptidoglycan biosynthesis. Its function is as follows. Provides the (R)-glutamate required for cell wall biosynthesis. In Streptococcus suis (strain 98HAH33), this protein is Glutamate racemase.